Here is a 510-residue protein sequence, read N- to C-terminus: MSFPGVIFVVSFFPLLMGIAVYRLLWHPLASFKGPKLAAVTDWWFCKKWLNGRYHQTLEKLQLQYGDVIRIAPNELVFATPEAARDIYTRCNPDQDLQFIKQPPFYKQSEGFPTLVTETDPAAHRTLRKPLERGFSPSSLKDYGRVIERVADDLTAQLEKASEHSNAVDVKAWAARFTFDVITEVTFGKSSGTVAQGKNTVWLDLLTGNIAAAAVGVAIRRQPHAVKTLLRSIFAKLSKTAKLRAQYLSVCRKMCEERLRDPPKAANLFDHVLATCPPVEKDADNHGYLVFLQGQAAALVSGGTETSSTLLSSLIYNLLAHPAHLARLQYEVRNAFSQSGEIDIESTKQLKYLQAVIDESLRIFPPVGFGLPRVCPGAMIGGVYVPKGTVVQAPDILMVRNSRYFVRPYEFLPERWLPKDHEFYDEQFSGDRKEASKPFSLGPRQCIGMSLAYAEWRIVLAKLVLKFDWEIIGETQDLMDVARLKLLWEMPPILVSFKPVGGLAAASPGA.

Residues 1–21 (MSFPGVIFVVSFFPLLMGIAV) form a helical membrane-spanning segment. A heme-binding site is contributed by C446.

It belongs to the cytochrome P450 family. Heme is required as a cofactor.

It localises to the membrane. It functions in the pathway secondary metabolite biosynthesis; terpenoid biosynthesis. Functionally, cytochrome P450 monooxygenase; part of the gene cluster that mediates the biosynthesis of betaestacins. The bifunctional terpene synthase btcA converts isopentenyl diphosphate (IPP) and dimethylallyl diphosphate (DMAPP) into the sesterterpene betaestacin I. The C-terminal prenyltransferase (PT) domain of btcA catalyzes formation of GFPP, whereas the N-terminal terpene cyclase (TC) domain catalyzes the cyclization of GFPP into betaestacin I. The cytochrome P450 monooxygenase btcB is then responsible for the six-step oxidation of betaestacin I to yield betaestacin II. The roles of the cytochrome P450 monooxygenase btcC and the alpha-ketoglutarate-dependent dioxygenase btcD have not been identified yet. In Neocamarosporium betae (Beet black rot fungus), this protein is Cytochrome P450 monooxygenase btcC.